We begin with the raw amino-acid sequence, 56 residues long: Large ribosomal subunit protein bL32 (56 aa).

The segment at M1–H37 is disordered.

The protein belongs to the bacterial ribosomal protein bL32 family.

The sequence is that of Large ribosomal subunit protein bL32 from Photorhabdus laumondii subsp. laumondii (strain DSM 15139 / CIP 105565 / TT01) (Photorhabdus luminescens subsp. laumondii).